We begin with the raw amino-acid sequence, 550 residues long: Chaperonin GroEL (550 aa).

ATP-binding positions include threonine 30 to proline 33, lysine 51, aspartate 87 to threonine 91, glycine 415, asparagine 480 to alanine 482, and aspartate 496.

The protein belongs to the chaperonin (HSP60) family. As to quaternary structure, forms a cylinder of 14 subunits composed of two heptameric rings stacked back-to-back. Interacts with the co-chaperonin GroES.

The protein localises to the cytoplasm. The enzyme catalyses ATP + H2O + a folded polypeptide = ADP + phosphate + an unfolded polypeptide.. Functionally, together with its co-chaperonin GroES, plays an essential role in assisting protein folding. The GroEL-GroES system forms a nano-cage that allows encapsulation of the non-native substrate proteins and provides a physical environment optimized to promote and accelerate protein folding. This chain is Chaperonin GroEL, found in Variovorax paradoxus (strain S110).